We begin with the raw amino-acid sequence, 141 residues long: Hemoglobin subunit alpha (141 aa).

Residues 1-141 (VLSPADKTNI…VSTVLTSKYR (141 aa)) enclose the Globin domain. Serine 3 bears the Phosphoserine mark. Position 7 is an N6-succinyllysine (lysine 7). The residue at position 8 (threonine 8) is a Phosphothreonine. Lysine 11 is subject to N6-succinyllysine. The residue at position 16 (lysine 16) is an N6-acetyllysine; alternate. Lysine 16 is subject to N6-succinyllysine; alternate. Phosphotyrosine is present on tyrosine 24. Serine 35 is subject to Phosphoserine. At lysine 40 the chain carries N6-succinyllysine. Residue serine 49 is modified to Phosphoserine. O2 is bound at residue histidine 58. Histidine 87 is a binding site for heme b. The residue at position 102 (serine 102) is a Phosphoserine. Position 108 is a phosphothreonine (threonine 108). Serine 124 is modified (phosphoserine). Phosphothreonine is present on residues threonine 134 and threonine 137. Serine 138 carries the post-translational modification Phosphoserine.

It belongs to the globin family. Heterotetramer of two alpha chains and two beta chains. Red blood cells.

Involved in oxygen transport from the lung to the various peripheral tissues. In terms of biological role, hemopressin acts as an antagonist peptide of the cannabinoid receptor CNR1. Hemopressin-binding efficiently blocks cannabinoid receptor CNR1 and subsequent signaling. The chain is Hemoglobin subunit alpha (HBA) from Vulpes vulpes (Red fox).